A 209-amino-acid chain; its full sequence is Holliday junction branch migration complex subunit RuvA (209 aa).

Residues 1-70 (MINYLKGKTT…EDQQILYGFS (70 aa)) form a domain I region. The domain II stretch occupies residues 71–149 (TDSERDLFRQ…QWEQAIALKT (79 aa)). Positions 150 to 160 (PVSVGVPSREI) are flexible linker. The domain III stretch occupies residues 160-209 (ILEEVEMTLLALGYTDEEIDQAISAISQDNLLLKNPHVEEWLKSAIAWLS).

Belongs to the RuvA family. As to quaternary structure, homotetramer. Forms an RuvA(8)-RuvB(12)-Holliday junction (HJ) complex. HJ DNA is sandwiched between 2 RuvA tetramers; dsDNA enters through RuvA and exits via RuvB. An RuvB hexamer assembles on each DNA strand where it exits the tetramer. Each RuvB hexamer is contacted by two RuvA subunits (via domain III) on 2 adjacent RuvB subunits; this complex drives branch migration. In the full resolvosome a probable DNA-RuvA(4)-RuvB(12)-RuvC(2) complex forms which resolves the HJ.

It localises to the cytoplasm. Functionally, the RuvA-RuvB-RuvC complex processes Holliday junction (HJ) DNA during genetic recombination and DNA repair, while the RuvA-RuvB complex plays an important role in the rescue of blocked DNA replication forks via replication fork reversal (RFR). RuvA specifically binds to HJ cruciform DNA, conferring on it an open structure. The RuvB hexamer acts as an ATP-dependent pump, pulling dsDNA into and through the RuvAB complex. HJ branch migration allows RuvC to scan DNA until it finds its consensus sequence, where it cleaves and resolves the cruciform DNA. This is Holliday junction branch migration complex subunit RuvA from Gloeothece citriformis (strain PCC 7424) (Cyanothece sp. (strain PCC 7424)).